The following is a 1088-amino-acid chain: DNA ligase 4 (1088 aa).

2 disordered regions span residues 1–56 (MALS…KFND) and 73–117 (TTTT…TTTT). Composition is skewed to low complexity over residues 25–53 (DFKNQQQINTSKTTNNNNNINNKNNYNNK) and 73–90 (TTTTTTKNTSTNSNINKT). A compositionally biased stretch (acidic residues) spans 95–105 (DDIFDDEDEDS). 9 residues coordinate ATP: glutamate 414, lysine 416, arginine 421, glutamate 467, phenylalanine 514, glutamate 574, lysine 579, lysine 596, and lysine 598. The active-site N6-AMP-lysine intermediate is lysine 416. Glutamate 467 is a binding site for Mg(2+). Position 574 (glutamate 574) interacts with Mg(2+). BRCT domains follow at residues 827-917 (PTQN…PKYM) and 984-1088 (CWWS…EILD).

Belongs to the ATP-dependent DNA ligase family. Requires Mg(2+) as cofactor.

It localises to the nucleus. It carries out the reaction ATP + (deoxyribonucleotide)n-3'-hydroxyl + 5'-phospho-(deoxyribonucleotide)m = (deoxyribonucleotide)n+m + AMP + diphosphate.. Its function is as follows. DNA ligase involved in DNA non-homologous end joining (NHEJ); required for double-strand break (DSB) repair. This is DNA ligase 4 (lig4) from Dictyostelium discoideum (Social amoeba).